The sequence spans 194 residues: Adenylate kinase (194 aa).

Residue 8 to 16 (GIPGVGKST) participates in ATP binding.

It belongs to the archaeal adenylate kinase family. In terms of assembly, homotrimer.

The protein resides in the cytoplasm. It carries out the reaction AMP + ATP = 2 ADP. The sequence is that of Adenylate kinase (adkA) from Sulfolobus acidocaldarius (strain ATCC 33909 / DSM 639 / JCM 8929 / NBRC 15157 / NCIMB 11770).